The primary structure comprises 290 residues: Aquaporin-3 (290 aa).

The Cytoplasmic segment spans residues 1–24 (MGRQKELVTRCGEMLHIRYRLLRQ). Residues 25-42 (ALAECLGTLILVMFGCGS) traverse the membrane as a helical segment. Over 43-56 (VAQVVLSRGTHGGF) the chain is Extracellular. The chain crosses the membrane as a helical span at residues 57–74 (LTINLAFGFAVTLGILVA). At 75–78 (GQVS) the chain is on the cytoplasmic side. An intramembrane region (discontinuously helical) is located at residues 79–92 (GAHLNPAVTFAMCF). An NPA 1 motif is present at residues 83–85 (NPA). Topologically, residues 93–100 (LAREPWIK) are cytoplasmic. A helical membrane pass occupies residues 101-121 (LPVYTLAQTLGAFLGAGIIFG). Residues 122–159 (LYYDAIWAFANNQLIVSGPNGTAGIFATYPSGHLDMVN) lie on the Extracellular side of the membrane. A glycan (N-linked (GlcNAc...) asparagine) is linked at asparagine 141. A helical transmembrane segment spans residues 160–177 (GFFDQFIGTASLIVCVLA). Over 178–189 (IVDPNNNPVPRG) the chain is Cytoplasmic. A helical membrane pass occupies residues 190-206 (LEAFTVGLVVLVIGTSM). The Extracellular portion of the chain corresponds to 207-210 (GFNS). Residues 211–224 (GYAVNPARDFGPRL) constitute an intramembrane region (discontinuously helical). Positions 215-217 (NPA) match the NPA 2 motif. The Extracellular portion of the chain corresponds to 225–242 (FTAIAGWGSEVFTTGRHW). Residues 243 to 264 (WWVPIASPLLGSIAGVFVYQLM) form a helical membrane-spanning segment. At 265–290 (IGCHLEPPPPSTDEENVKLSQVKHKE) the chain is on the cytoplasmic side.

The protein belongs to the MIP/aquaporin (TC 1.A.8) family. As to quaternary structure, homotetramer; each monomer provides an independent glycerol/water pore. Could also exist in other oligomeric states. Highly expressed in stomach and spleen, with lower expression in kidney and lung.

The protein localises to the cell membrane. It localises to the basolateral cell membrane. It catalyses the reaction glycerol(in) = glycerol(out). The catalysed reaction is H2O(in) = H2O(out). The enzyme catalyses urea(in) = urea(out). It carries out the reaction H2O2(out) = H2O2(in). Aquaglyceroporins form homotetrameric transmembrane channels, with each monomer independently mediating glycerol and water transport across the plasma membrane along their osmotic gradient. Could also be permeable to urea. Also participates in cell permeability to H2O2 and H2O2-mediated signaling. In skin, transports glycerol to the epidermis and stratum corneum, where it maintains hydration, elasticity, and supports lipid biosynthesis for barrier repair. In kidney, contributes to the reabsorption of water, helping the body maintain proper fluid balance. The sequence is that of Aquaporin-3 from Sus scrofa (Pig).